The primary structure comprises 614 residues: Vitamin B12 transporter BtuB (614 aa).

The first 20 residues, 1-20 (MIKKASLLTACSVTAFSAWA), serve as a signal peptide directing secretion. The TonB box motif lies at 26 to 33 (DTLVVTAN). Residues 38-152 (PRSTVLAPTT…IGGVVNIITT (115 aa)) enclose the TBDR plug domain. Cyanocob(III)alamin-binding positions include Leu83, Ser85, Asn92, and 110–111 (GS). Residues 155-614 (EPGTEISAGW…EYTLSGSYTF (460 aa)) form the TBDR beta-barrel domain. The next 3 beta stranded transmembrane spans lie at 158–165 (TEISAGWG), 169–178 (YQNYDVSTQQ), and 184–195 (TRVTLLGDYAHT). Asp199, Gln211, Asp213, and Asp215 together coordinate Ca(2+). A run of 2 beta stranded transmembrane segments spans residues 217–227 (FLSKTLYGALE) and 232–248 (DAWS…NRTN). Ca(2+) contacts are provided by Tyr249 and Asp250. Ala251 is a binding site for cyanocob(III)alamin. Position 261 (Asp261) interacts with Ca(2+). Beta stranded transmembrane passes span 263–277 (RKLY…LRYN), 279–296 (ELIK…KDYN), 309–325 (TLDE…NNII), 328–337 (HGNVGAGVDW), 353–369 (YDQR…QQVG), 371–381 (FTFEGAARSDD), 385–400 (FGRH…WEFI), 403–417 (YRFI…KAPN), 434–443 (KSKQWEGAFE), 449–458 (VNWRISGYRN), 473–490 (YYNE…TANF), 494–509 (PLTH…ARNA), 517–529 (RRAK…QLDW), and 535–550 (DWGI…YDKD). Thr309 provides a ligand contact to cyanocob(III)alamin. Arg517 provides a ligand contact to cyanocob(III)alamin. Residue Tyr551 participates in cyanocob(III)alamin binding. The next 3 beta stranded transmembrane spans lie at 558 to 572 (TVKM…LAVA), 585 to 596 (IANLFDKDYETV), and 602 to 614 (AGRE…SYTF). The short motif at 597 to 614 (YGYQTAGREYTLSGSYTF) is the TonB C-terminal box element.

The protein belongs to the TonB-dependent receptor family. BtuB (TC 1.B.14.3.1) subfamily.

It localises to the cell outer membrane. Its function is as follows. Involved in the active translocation of vitamin B12 (cyanocobalamin) across the outer membrane to the periplasmic space. It derives its energy for transport by interacting with the trans-periplasmic membrane protein TonB. The chain is Vitamin B12 transporter BtuB from Escherichia coli O157:H7.